We begin with the raw amino-acid sequence, 183 residues long: Photosystem I assembly protein Ycf4 (183 aa).

Helical transmembrane passes span 23-43 (WASV…SSYF) and 64-84 (VMSF…LTII).

Belongs to the Ycf4 family.

The protein localises to the plastid. It is found in the chloroplast thylakoid membrane. Functionally, seems to be required for the assembly of the photosystem I complex. The sequence is that of Photosystem I assembly protein Ycf4 from Stigeoclonium helveticum (Green alga).